A 75-amino-acid chain; its full sequence is Sec-independent protein translocase protein TatA (75 aa).

The chain crosses the membrane as a helical span at residues 1–21 (MGMPSMPELLIVLAIVVLLFG). The disordered stretch occupies residues 47-75 (DEEEEVKEITKKEEPKVEAAAEEKKSENA). The segment covering 53-75 (KEITKKEEPKVEAAAEEKKSENA) has biased composition (basic and acidic residues).

It belongs to the TatA/E family. As to quaternary structure, the Tat system comprises two distinct complexes: a TatABC complex, containing multiple copies of TatA, TatB and TatC subunits, and a separate TatA complex, containing only TatA subunits. Substrates initially bind to the TatABC complex, which probably triggers association of the separate TatA complex to form the active translocon.

The protein resides in the cell inner membrane. Functionally, part of the twin-arginine translocation (Tat) system that transports large folded proteins containing a characteristic twin-arginine motif in their signal peptide across membranes. TatA could form the protein-conducting channel of the Tat system. The protein is Sec-independent protein translocase protein TatA of Sulfurovum sp. (strain NBC37-1).